We begin with the raw amino-acid sequence, 583 residues long: Ras-specific guanine nucleotide-releasing factor RalGPS2 (583 aa).

The Ras-GEF domain occupies 49–287; the sequence is TPEEYAGQIT…YKLSLKIEPG (239 aa). A disordered region spans residues 283–314; sequence KIEPGTSTPRSAASREDLVGPEVGASPQSGRK. A phosphoserine mark is found at S293, S296, S308, and S311. The PXXP signature appears at 324–327; the sequence is PQTP. T326 is subject to Phosphothreonine. S329 and S343 each carry phosphoserine. T361 carries the post-translational modification Phosphothreonine. Residues 372–406 form a disordered region; that stretch reads DDSVMEPHAPSRGQAESSTLSSGISIGSSDGSELS. At S374 the chain carries Phosphoserine. Over residues 387–403 the composition is skewed to low complexity; the sequence is ESSTLSSGISIGSSDGS. A Phosphoserine modification is found at S422. A PH domain is found at 457–569; sequence AVTIQGVLRR…WFKHLSAACQ (113 aa). The required for stimulation of nucleotide exchange by RALA stretch occupies residues 459–583; that stretch reads TIQGVLRRKT…QVPTNLMTFE (125 aa).

As to quaternary structure, interacts with the SH3 domains of GRB2 and PLCG1. Interacts with RALA.

The protein localises to the cytoplasm. It localises to the cell membrane. Functionally, guanine nucleotide exchange factor for the small GTPase RALA. May be involved in cytoskeletal organization. May also be involved in the stimulation of transcription in a Ras-independent fashion. The chain is Ras-specific guanine nucleotide-releasing factor RalGPS2 (RALGPS2) from Homo sapiens (Human).